We begin with the raw amino-acid sequence, 257 residues long: Acetylglutamate kinase (257 aa).

Substrate-binding positions include 43 to 44 (GG), Arg-65, and Asn-157. ATP is bound by residues 180-185 (DVSGIL) and 208-210 (IIT).

The protein belongs to the acetylglutamate kinase family. ArgB subfamily. As to quaternary structure, homodimer.

The protein localises to the cytoplasm. The catalysed reaction is N-acetyl-L-glutamate + ATP = N-acetyl-L-glutamyl 5-phosphate + ADP. Its pathway is amino-acid biosynthesis; L-arginine biosynthesis; N(2)-acetyl-L-ornithine from L-glutamate: step 2/4. In terms of biological role, catalyzes the ATP-dependent phosphorylation of N-acetyl-L-glutamate. The chain is Acetylglutamate kinase from Enterobacter sp. (strain 638).